Reading from the N-terminus, the 1502-residue chain is Gem-associated protein 5 (1502 aa).

The interval 1 to 124 (MKPEPRTLPP…LHWSPTVKDL (124 aa)) is important for interaction with U1 snRNA. The segment at 13–15 (NWY) is interaction with U4 snRNA. Ser-48 bears the Phosphoserine mark. WD repeat units follow at residues 62 to 104 (GHTE…VVTE), 107 to 148 (LHQH…QHLF), 150 to 189 (EPRT…EVIH), 193 to 264 (GHDD…GVMV), 280 to 321 (TVKE…RRKY), 333 to 374 (HSRI…CCWT), 377 to 417 (SLGG…NNYD), 424 to 464 (GVKS…PPQI), 468 to 509 (YHKK…VVLQ), 533 to 573 (RYKL…LLCT), and 576 to 622 (QHHK…ESNP). Ser-624 bears the Phosphoserine mark. WD repeat units lie at residues 637-677 (GHTA…PLFN) and 680-720 (GHRG…HSRP). Disordered stretches follow at residues 740-797 (KLKK…SPVV) and 819-838 (SSKA…EALL). Residue Lys-754 forms a Glycyl lysine isopeptide (Lys-Gly) (interchain with G-Cter in SUMO2) linkage. Phosphoserine is present on residues Ser-757, Ser-770, and Ser-778. Over residues 825 to 838 (LKKEPAKEKPEALL) the composition is skewed to basic and acidic residues. Residue Ser-845 is modified to Phosphoserine. 2 disordered regions span residues 1309-1338 (VSDK…LSAE) and 1378-1427 (HQKS…SLPE). Positions 1355-1382 (ASLQTSQRTVAEVQETLAEMIRQHQKSQ) form a coiled coil. A compositionally biased stretch (polar residues) spans 1380-1391 (KSQLCKATTNGP). The span at 1392–1407 (SRDEPSRDEPSQEAER) shows a compositional bias: basic and acidic residues.

Belongs to the WD repeat gemin-5 family. In terms of assembly, part of the core SMN complex that contains SMN1, GEMIN2/SIP1, DDX20/GEMIN3, GEMIN4, GEMIN5, GEMIN6, GEMIN7, GEMIN8 and STRAP/UNRIP. Part of the SMN-Sm complex that contains SMN1, GEMIN2/SIP1, DDX20/GEMIN3, GEMIN4, GEMIN5, GEMIN6, GEMIN7, GEMIN8, STRAP/UNRIP and the Sm proteins SNRPB, SNRPD1, SNRPD2, SNRPD3, SNRPE, SNRPF and SNRPG. Interacts directly with SMN1, SNRPB, SNRPD1, SNRPD2, SNRPD3 and SNRPE. Identified in a SMN complex that contains GEMIN2/SIP1. Interacts with cytosolic DDX20/GEMIN3 and GEMIN4. Interacts with SNRNP70 and HNRNPU. Identified in a complex with 80S ribosomes; binds to the 60S large ribosomal subunit. Interacts with the ribosomal subunits RPL3 and RPL4.

The protein resides in the nucleus. Its subcellular location is the nucleoplasm. It localises to the gem. The protein localises to the cytoplasm. Functionally, the SMN complex catalyzes the assembly of small nuclear ribonucleoproteins (snRNPs), the building blocks of the spliceosome, and thereby plays an important role in the splicing of cellular pre-mRNAs. Most spliceosomal snRNPs contain a common set of Sm proteins SNRPB, SNRPD1, SNRPD2, SNRPD3, SNRPE, SNRPF and SNRPG that assemble in a heptameric protein ring on the Sm site of the small nuclear RNA to form the core snRNP (Sm core). In the cytosol, the Sm proteins SNRPD1, SNRPD2, SNRPE, SNRPF and SNRPG are trapped in an inactive 6S pICln-Sm complex by the chaperone CLNS1A that controls the assembly of the core snRNP. To assemble core snRNPs, the SMN complex accepts the trapped 5Sm proteins from CLNS1A forming an intermediate. Binding of snRNA inside 5Sm ultimately triggers eviction of the SMN complex, thereby allowing binding of SNRPD3 and SNRPB to complete assembly of the core snRNP. Within the SMN complex, GEMIN5 recognizes and delivers the small nuclear RNAs (snRNAs) to the SMN complex. Binds to the 7-methylguanosine cap of RNA molecules. Binds to the 3'-UTR of SMN1 mRNA and regulates its translation; does not affect mRNA stability. May play a role in the regulation of protein synthesis via its interaction with ribosomes. In Mus musculus (Mouse), this protein is Gem-associated protein 5 (Gemin5).